The chain runs to 593 residues: Transcription factor ATEG_07667 (593 aa).

Positions 18-47 (CTQCYKAKCRCVRTPSGDTCERCIRLKKRC) form a DNA-binding region, zn(2)-C6 fungal-type.

The protein resides in the nucleus. In terms of biological role, transcriptional regulator that regulates both the azasperpyranone A biosynthesis clusters A and B. Specifically up-regulates the expression of the cluster A and B specific transcription factors ATEG_03638 and ATEG_07666, which in turn activate the expression of their respective clusters. This chain is Transcription factor ATEG_07667, found in Aspergillus terreus (strain NIH 2624 / FGSC A1156).